A 307-amino-acid polypeptide reads, in one-letter code: Putative ankyrin repeat protein L59 (307 aa).

ANK repeat units lie at residues 41 to 67, 68 to 97, 98 to 127, 129 to 157, 158 to 187, 188 to 217, 219 to 247, 248 to 277, and 279 to 307; these read LFNK…NLEK, IDNK…DTTN, HNYS…DIRA, DDEA…DVRN, RNDF…DIRT, DDDY…NIHA, GDSA…DIRI, DNDY…DIGA, and NNYA…LKLY.

The polypeptide is Putative ankyrin repeat protein L59 (Acanthamoeba polyphaga (Amoeba)).